A 541-amino-acid polypeptide reads, in one-letter code: Tegument protein UL21 homolog (541 aa).

It belongs to the alphaherpesvirinae UL21 protein family. In terms of assembly, interacts (via C-terminus) with UL16.

It is found in the virion tegument. The protein localises to the host cytoplasm. Its subcellular location is the host nucleus. Its function is as follows. May participate in DNA packaging/capsid maturation events. Promotes efficient incorporation of tegument proteins UL46, UL49, and US3 homologs into virions. May also play a role in capsid transport to the trans-Golgi network (TGN). The protein is Tegument protein UL21 homolog of Varicella-zoster virus (strain Oka vaccine) (HHV-3).